The chain runs to 311 residues: Nod factor export ATP-binding protein I (311 aa).

An ABC transporter domain is found at 13–243 (IDLAGVSKSY…QIGCPVIEIY (231 aa)). 45–52 (GPNGAGKS) contacts ATP.

This sequence belongs to the ABC transporter superfamily. Lipooligosaccharide exporter (TC 3.A.1.102) family. As to quaternary structure, the complex is composed of two ATP-binding proteins (NodI) and two transmembrane proteins (NodJ).

The protein resides in the cell inner membrane. Functionally, part of the ABC transporter complex NodIJ involved in the export of the nodulation factors (Nod factors), the bacterial signal molecules that induce symbiosis and subsequent nodulation induction. Nod factors are LCO (lipo-chitin oligosaccharide), a modified beta-1,4-linked N-acetylglucosamine oligosaccharide. This subunit is responsible for energy coupling to the transport system. This is Nod factor export ATP-binding protein I from Rhizobium johnstonii (strain DSM 114642 / LMG 32736 / 3841) (Rhizobium leguminosarum bv. viciae).